The sequence spans 360 residues: MPHCFTFKPASPEGSLGDDHLPHPSPEGSVASTFNLSHELAHAFQTPSYHDIRSRLLVIDPTQENLELFLSQELRPNNESVQEALSLRHAKQTTLTNLVSTYFQHSEDATRFCLNLYQNVHSARCHLYTPLLDLFNIFPRDSHSAIDESFCNLAFDVFLKLDTFENPFASPESHSFQDTQLCFYQLADKLDTRIRKSKSRVRLLHHATAGSALCLVTAVVVVAASAAFIAYHALPTILVVAGPLCTPYLPHSFKKKELSNIFQLNVAAKGTFALNKDLDTIDRLVSRLHTGVKNDKLLIRLGLERGRDVYTIPEFVKQLRKSHVNHTHQLEVLVDHICRWFTNVNKSRSLLLKEILRPQT.

The disordered stretch occupies residues 1–29 (MPHCFTFKPASPEGSLGDDHLPHPSPEGS). 2 helical membrane-spanning segments follow: residues 205–225 (HHAT…VAAS) and 229–249 (IAYH…TPYL).

This sequence belongs to the UPF0496 family.

The protein resides in the membrane. The chain is UPF0496 protein At3g19250 from Arabidopsis thaliana (Mouse-ear cress).